Here is a 408-residue protein sequence, read N- to C-terminus: Tryptophan synthase beta chain (408 aa).

The residue at position 103 (lysine 103) is an N6-(pyridoxal phosphate)lysine.

This sequence belongs to the TrpB family. In terms of assembly, tetramer of two alpha and two beta chains. Pyridoxal 5'-phosphate serves as cofactor.

It carries out the reaction (1S,2R)-1-C-(indol-3-yl)glycerol 3-phosphate + L-serine = D-glyceraldehyde 3-phosphate + L-tryptophan + H2O. The protein operates within amino-acid biosynthesis; L-tryptophan biosynthesis; L-tryptophan from chorismate: step 5/5. Its function is as follows. The beta subunit is responsible for the synthesis of L-tryptophan from indole and L-serine. This Koribacter versatilis (strain Ellin345) protein is Tryptophan synthase beta chain.